We begin with the raw amino-acid sequence, 257 residues long: tRNA uridine(34) hydroxylase (257 aa).

The 95-residue stretch at 128–222 (NGRRLVMLDA…YFEQVGGEGY (95 aa)) folds into the Rhodanese domain. Cys-182 acts as the Cysteine persulfide intermediate in catalysis.

It belongs to the TrhO family.

It catalyses the reaction uridine(34) in tRNA + AH2 + O2 = 5-hydroxyuridine(34) in tRNA + A + H2O. Its function is as follows. Catalyzes oxygen-dependent 5-hydroxyuridine (ho5U) modification at position 34 in tRNAs. In Xylella fastidiosa (strain 9a5c), this protein is tRNA uridine(34) hydroxylase.